The chain runs to 119 residues: Large ribosomal subunit protein bL20 (119 aa).

The protein belongs to the bacterial ribosomal protein bL20 family.

Functionally, binds directly to 23S ribosomal RNA and is necessary for the in vitro assembly process of the 50S ribosomal subunit. It is not involved in the protein synthesizing functions of that subunit. The chain is Large ribosomal subunit protein bL20 from Paracoccus denitrificans (strain Pd 1222).